We begin with the raw amino-acid sequence, 479 residues long: Aldehyde dehydrogenase family 3 member B3 (479 aa).

Active-site residues include E223 and C257. Residue C476 is the site of S-geranylgeranyl cysteine attachment. The propeptide at 477 to 479 is removed in mature form; that stretch reads TLL.

It belongs to the aldehyde dehydrogenase family. Geranylgeranylation is important for membrane localization and enzyme activity. As to expression, expressed in testis, kidney, small intestine, spleen, white adipose tissue, liver and lung.

Its subcellular location is the cell membrane. The enzyme catalyses an aldehyde + NAD(+) + H2O = a carboxylate + NADH + 2 H(+). It carries out the reaction hexadecanoate + NADH + 2 H(+) = hexadecanal + NAD(+) + H2O. The catalysed reaction is octanal + NAD(+) + H2O = octanoate + NADH + 2 H(+). In terms of biological role, oxidizes medium and long chain aldehydes into non-toxic fatty acids. This is Aldehyde dehydrogenase family 3 member B3 from Mus musculus (Mouse).